The following is an 834-amino-acid chain: DNA gyrase subunit A (834 aa).

The Topo IIA-type catalytic domain maps to 34–500 (LPDIRDGLKP…ADDIRDIEDI (467 aa)). Tyr-122 (O-(5'-phospho-DNA)-tyrosine intermediate) is an active-site residue. Residues 527–533 (QRRGGHG) carry the GyrA-box motif. The tract at residues 810 to 834 (LSSNENDDEVLSGSEEECSDTVSLR) is disordered. Over residues 814–828 (ENDDEVLSGSEEECS) the composition is skewed to acidic residues.

It belongs to the type II topoisomerase GyrA/ParC subunit family. Heterotetramer, composed of two GyrA and two GyrB chains. In the heterotetramer, GyrA contains the active site tyrosine that forms a transient covalent intermediate with DNA, while GyrB binds cofactors and catalyzes ATP hydrolysis.

It is found in the cytoplasm. The enzyme catalyses ATP-dependent breakage, passage and rejoining of double-stranded DNA.. Functionally, a type II topoisomerase that negatively supercoils closed circular double-stranded (ds) DNA in an ATP-dependent manner to modulate DNA topology and maintain chromosomes in an underwound state. Negative supercoiling favors strand separation, and DNA replication, transcription, recombination and repair, all of which involve strand separation. Also able to catalyze the interconversion of other topological isomers of dsDNA rings, including catenanes and knotted rings. Type II topoisomerases break and join 2 DNA strands simultaneously in an ATP-dependent manner. The sequence is that of DNA gyrase subunit A from Chlamydia pneumoniae (Chlamydophila pneumoniae).